The sequence spans 481 residues: Glutamyl-tRNA(Gln) amidotransferase subunit A (481 aa).

Catalysis depends on charge relay system residues Lys-78 and Ser-153. Ser-177 acts as the Acyl-ester intermediate in catalysis.

The protein belongs to the amidase family. GatA subfamily. In terms of assembly, heterotrimer of A, B and C subunits.

It catalyses the reaction L-glutamyl-tRNA(Gln) + L-glutamine + ATP + H2O = L-glutaminyl-tRNA(Gln) + L-glutamate + ADP + phosphate + H(+). In terms of biological role, allows the formation of correctly charged Gln-tRNA(Gln) through the transamidation of misacylated Glu-tRNA(Gln) in organisms which lack glutaminyl-tRNA synthetase. The reaction takes place in the presence of glutamine and ATP through an activated gamma-phospho-Glu-tRNA(Gln). The protein is Glutamyl-tRNA(Gln) amidotransferase subunit A of Borreliella afzelii (strain PKo) (Borrelia afzelii).